Reading from the N-terminus, the 608-residue chain is MSQEGDYGRWTISSSDESEEEKPKPDKPSTSSLLCARQGAANEPRYTCSEAQKAAHKRKISPVKFSNTDSVLPPKRQKSGSQEDLGWCLSSSDDELQPEMPQKQAEKVVIKKEKDISAPNDGTAQRTENHGAPACHRLKEEEDEYETSGEGQDIWDMLDKGNPFQFYLTRVSGVKPKYNSGALHIKDILSPLFGTLVSSAQFNYCFDVDWLVKQYPPEFRKKPILLVHGDKREAKAHLHAQAKPYENISLCQAKLDIAFGTHHTKMMLLLYEEGLRVVIHTSNLIHADWHQKTQGIWLSPLYPRIADGTHKSGESPTHFKADLISYLMAYNAPSLKEWIDVIHKHDLSETNVYLIGSTPGRFQGSQKDNWGHFRLKKLLKDHASSMPNAESWPVVGQFSSVGSLGADESKWLCSEFKESMLTLGKESKTPGKSSVPLYLIYPSVENVRTSLEGYPAGGSLPYSIQTAEKQNWLHSYFHKWSAETSGRSNAMPHIKTYMRPSPDFSKIAWFLVTSANLSKAAWGALEKNGTQLMIRSYELGVLFLPSAFGLDSFKVKQKFFAGSQEPMATFPVPYDLPPELYGSKDRPWIWNIPYVKAPDTHGNMWVPS.

Residues 1 to 101 (MSQEGDYGRW…SDDELQPEMP (101 aa)) form a disordered region. Phosphoserine is present on serine 61. A Phosphothreonine modification is found at threonine 147. Position 148 is a phosphoserine (serine 148). Histidine 263 (nucleophile) is an active-site residue. Residue lysine 265 participates in substrate binding. The segment at 400–403 (SVGS) is interaction with DNA. Histidine 493 acts as the Proton donor/acceptor in catalysis. A substrate-binding site is contributed by lysine 495.

It belongs to the tyrosyl-DNA phosphodiesterase family. Monomer. Phosphorylated on serine and/or threonine residues, but not on tyrosine residues. As to expression, ubiquitously expressed. Similar expression throughout the central nervous system (whole brain, amygdala, caudate nucleus, cerebellum, cerebral cortex, frontal lobe, hippocampus, medulla oblongata, occipital lobe, putamen, substantia nigra, temporal lobe, thalamus, nucleus accumbens and spinal cord) and increased expression in testis and thymus.

Its subcellular location is the nucleus. The protein localises to the cytoplasm. DNA repair enzyme that can remove a variety of covalent adducts from DNA through hydrolysis of a 3'-phosphodiester bond, giving rise to DNA with a free 3' phosphate. Catalyzes the hydrolysis of dead-end complexes between DNA and the topoisomerase I active site tyrosine residue. Hydrolyzes 3'-phosphoglycolates on protruding 3' ends on DNA double-strand breaks due to DNA damage by radiation and free radicals. Acts on blunt-ended double-strand DNA breaks and on single-stranded DNA. Has low 3'exonuclease activity and can remove a single nucleoside from the 3'end of DNA and RNA molecules with 3'hydroxyl groups. Has no exonuclease activity towards DNA or RNA with a 3'phosphate. This chain is Tyrosyl-DNA phosphodiesterase 1 (TDP1), found in Homo sapiens (Human).